The chain runs to 56 residues: Genome polyprotein (56 aa).

Positions 1–30 are disordered; the sequence is ETMLDRIASGDLESSVDDPRSAEDKRFESH. The span at 17 to 30 shows a compositional bias: basic and acidic residues; that stretch reads DDPRSAEDKRFESH.

It belongs to the picornaviridae polyprotein family. In terms of assembly, homopentamer. Homooligomer. As to quaternary structure, interacts with capsid protein VP2. Interacts with capsid protein VP3. Post-translationally, specific enzymatic cleavages by viral protease in vivo yield a variety of precursors and mature proteins. Polyprotein processing intermediates are produced, such as P1-2A which is a functional precursor of the structural proteins, VP0 which is a VP4-VP2 precursor, VP1-2A precursor, 3ABC precursor which is a stable and catalytically active precursor of 3A, 3B and 3C proteins, 3AB and 3CD precursors. The assembly signal 2A is removed from VP1-2A by a host protease, possibly host Cathepsin L. This cleavage occurs over a region of 3 amino-acids probably generating VP1 proteins with heterogeneous C-termini. The assembly signal 2A is removed from VP1-2A by a host protease, possibly host Cathepsin L in naked virions. This cleavage does not occur in enveloped virions. This cleavage occurs over a region of 3 amino-acids probably generating VP1 proteins with heterogeneous C-termini.

Its subcellular location is the virion. It is found in the host endosome. The protein resides in the host multivesicular body. Its function is as follows. Capsid proteins VP1, VP2, and VP3 form a closed capsid enclosing the viral positive strand RNA genome. All these proteins contain a beta-sheet structure called beta-barrel jelly roll. Together they form an icosahedral capsid (T=3) composed of 60 copies of each VP1, VP2, and VP3, with a diameter of approximately 300 Angstroms. VP1 is situated at the 12 fivefold axes, whereas VP2 and VP3 are located at the quasi-sixfold axes. The naked capsid interacts with the host receptor HAVCR1 to provide virion attachment to and probably entry into the target cell. Precursor component of immature procapsids that corresponds to an extended form of the structural protein VP1. After maturation, possibly by the host Cathepsin L, the assembly signal 2A is cleaved to give rise to the mature VP1 protein. In Callithrix (Owl-faced monkey), this protein is Genome polyprotein.